Here is a 205-residue protein sequence, read N- to C-terminus: Molybdenum cofactor guanylyltransferase (205 aa).

Residues 14–16, K27, D77, and D107 contribute to the GTP site; that span reads LAG. D107 provides a ligand contact to Mg(2+).

Belongs to the MobA family. Monomer. Requires Mg(2+) as cofactor.

The protein resides in the cytoplasm. The enzyme catalyses Mo-molybdopterin + GTP + H(+) = Mo-molybdopterin guanine dinucleotide + diphosphate. Transfers a GMP moiety from GTP to Mo-molybdopterin (Mo-MPT) cofactor (Moco or molybdenum cofactor) to form Mo-molybdopterin guanine dinucleotide (Mo-MGD) cofactor. The polypeptide is Molybdenum cofactor guanylyltransferase (Burkholderia vietnamiensis (strain G4 / LMG 22486) (Burkholderia cepacia (strain R1808))).